The following is a 914-amino-acid chain: Trafficking kinesin-binding protein 2 (914 aa).

The span at 1–21 (MSQSQNAIFTSPTGEENLMNS) shows a compositional bias: polar residues. A disordered region spans residues 1-30 (MSQSQNAIFTSPTGEENLMNSNHRDSESIT). The region spanning 48 to 353 (EEQLPQYRLK…QEEIKELRSR (306 aa)) is the HAP1 N-terminal domain. Positions 134-354 (QALLKRNHVL…EEIKELRSRS (221 aa)) form a coiled coil. The tract at residues 359–509 (HLYFSQSYGA…KQFFAEEWQR (151 aa)) is interaction with HGS. Serine 420 carries the phosphoserine modification. Disordered stretches follow at residues 447-482 (QQTE…DSDL) and 765-787 (QPLP…SPCP). The segment covering 454–471 (LLNQGSSSEEVAGSSQKM) has biased composition (polar residues). Residues 775–787 (STPPNSPSHSPCP) show a composition bias toward pro residues.

Belongs to the milton family. Interacts with GABA-A receptor and O-GlcNAc transferase. Interacts with HGS. Interacts with RHOT1/Miro-1 and RHOT2/Miro-2. Post-translationally, O-glycosylated. As to expression, widely expressed, with highest expression in heart.

It localises to the cytoplasm. Its subcellular location is the early endosome. The protein localises to the mitochondrion. In terms of biological role, may regulate endosome-to-lysosome trafficking of membrane cargo, including EGFR. The protein is Trafficking kinesin-binding protein 2 (TRAK2) of Homo sapiens (Human).